The chain runs to 338 residues: MSFIDEVKIHVKSGDGGAGCVSFRREKFIPLGGPDGGDGGKGGNVIVEASPNLSTLLDLRQHPHQKAGRGRNGMGKDRHGAYGADLKMLLPVGTVIKDAETDEVLVDLNEPGMSVVLLKGGRGGQGNARFASSTNKAPKFAQPGEPGEERWLRLELKLMADVGLLGMPSVGKSSLISKISAARPKIADYHFTTLKPNLGVVAYKNYKSFVMADIPGLIEGAHEGAGLGHRFLKHLERTGQLIHILDISWMPDRDPLREYEAINRELALFNPELAEKKQIIVINKIDLPVVKENLATVLPYFEERGLKVFPISAATGEGIPALLDEIARNLWGQAEEEW.

One can recognise an Obg domain in the interval 1–159 (MSFIDEVKIH…RWLRLELKLM (159 aa)). One can recognise an OBG-type G domain in the interval 160 to 331 (ADVGLLGMPS…LLDEIARNLW (172 aa)). Residues 166–173 (GMPSVGKS), 191–195 (FTTLK), 213–216 (DIPG), 283–286 (NKID), and 312–314 (SAA) each bind GTP. Residues Ser-173 and Thr-193 each contribute to the Mg(2+) site.

This sequence belongs to the TRAFAC class OBG-HflX-like GTPase superfamily. OBG GTPase family. In terms of assembly, monomer. Requires Mg(2+) as cofactor.

The protein localises to the cytoplasm. Its function is as follows. An essential GTPase which binds GTP, GDP and possibly (p)ppGpp with moderate affinity, with high nucleotide exchange rates and a fairly low GTP hydrolysis rate. Plays a role in control of the cell cycle, stress response, ribosome biogenesis and in those bacteria that undergo differentiation, in morphogenesis control. This chain is GTPase Obg, found in Geotalea uraniireducens (strain Rf4) (Geobacter uraniireducens).